The chain runs to 1225 residues: DNA-directed RNA polymerase subunit beta' (1225 aa).

Residues cysteine 60, cysteine 62, cysteine 75, and cysteine 78 each contribute to the Zn(2+) site. Residues aspartate 450, aspartate 452, and aspartate 454 each contribute to the Mg(2+) site. Residues cysteine 818, cysteine 892, cysteine 899, and cysteine 902 each coordinate Zn(2+).

The protein belongs to the RNA polymerase beta' chain family. In terms of assembly, the RNAP catalytic core consists of 2 alpha, 1 beta, 1 beta' and 1 omega subunit. When a sigma factor is associated with the core the holoenzyme is formed, which can initiate transcription. It depends on Mg(2+) as a cofactor. Zn(2+) is required as a cofactor.

The enzyme catalyses RNA(n) + a ribonucleoside 5'-triphosphate = RNA(n+1) + diphosphate. Its function is as follows. DNA-dependent RNA polymerase catalyzes the transcription of DNA into RNA using the four ribonucleoside triphosphates as substrates. The polypeptide is DNA-directed RNA polymerase subunit beta' (Streptococcus pneumoniae (strain Hungary19A-6)).